Here is a 96-residue protein sequence, read N- to C-terminus: UPF0235 protein Shewmr4_1190 (96 aa).

This sequence belongs to the UPF0235 family.

The polypeptide is UPF0235 protein Shewmr4_1190 (Shewanella sp. (strain MR-4)).